Here is a 246-residue protein sequence, read N- to C-terminus: 1-(5-phosphoribosyl)-5-[(5-phosphoribosylamino)methylideneamino] imidazole-4-carboxamide isomerase (246 aa).

The Proton acceptor role is filled by Asp-8. Residue Asp-130 is the Proton donor of the active site.

Belongs to the HisA/HisF family.

It localises to the cytoplasm. The enzyme catalyses 1-(5-phospho-beta-D-ribosyl)-5-[(5-phospho-beta-D-ribosylamino)methylideneamino]imidazole-4-carboxamide = 5-[(5-phospho-1-deoxy-D-ribulos-1-ylimino)methylamino]-1-(5-phospho-beta-D-ribosyl)imidazole-4-carboxamide. The protein operates within amino-acid biosynthesis; L-histidine biosynthesis; L-histidine from 5-phospho-alpha-D-ribose 1-diphosphate: step 4/9. The chain is 1-(5-phosphoribosyl)-5-[(5-phosphoribosylamino)methylideneamino] imidazole-4-carboxamide isomerase from Shigella sonnei (strain Ss046).